Here is an 815-residue protein sequence, read N- to C-terminus: Protein-glutamine gamma-glutamyltransferase K (815 aa).

Over residues M1–R10 the composition is skewed to basic and acidic residues. Disordered regions lie at residues M1–A48 and D62–D101. Over residues W16–E25 the composition is skewed to pro residues. A Phosphothreonine modification is found at T21. Residues S23, S71, S83, S91, and S94 each carry the phosphoserine modification. Positions P66–S78 are enriched in low complexity. Over residues R79 to S91 the composition is skewed to basic and acidic residues. Residues C376, H435, and D458 contribute to the active site. Residues N498, D500, E547, and E552 each contribute to the Ca(2+) site. Residues G791–A815 form a disordered region. S803 carries the post-translational modification Phosphoserine.

The protein belongs to the transglutaminase superfamily. Transglutaminase family. Interacts with PLAAT4. Requires Ca(2+) as cofactor. In terms of processing, tyrosine-phosphorylated. Post-translationally, palmitoylated. The membrane anchorage region possesses a cluster of five cysteines within which fatty acid(s) may become thioester-linked. It is subject to phorbol ester-stimulated phosphorylation and is hypersensitive to proteolysis, which releases the enzyme in a soluble form. In terms of tissue distribution, expressed in large amounts in epithelial tissues (lung, liver and kidney).

It is found in the membrane. The enzyme catalyses L-glutaminyl-[protein] + L-lysyl-[protein] = [protein]-L-lysyl-N(6)-5-L-glutamyl-[protein] + NH4(+). In terms of biological role, catalyzes the cross-linking of proteins and the conjugation of polyamines to proteins. Responsible for cross-linking epidermal proteins during formation of the stratum corneum. Involved in cell proliferation. In Mus musculus (Mouse), this protein is Protein-glutamine gamma-glutamyltransferase K (Tgm1).